Here is a 262-residue protein sequence, read N- to C-terminus: Small ribosomal subunit protein uS2 (262 aa).

Residues 224 to 262 (GKQGQDDAQQETADDNAANETVSEDSLKNLKNSVEGKED) are disordered.

The protein belongs to the universal ribosomal protein uS2 family.

The chain is Small ribosomal subunit protein uS2 from Limosilactobacillus reuteri (strain DSM 20016) (Lactobacillus reuteri).